Consider the following 124-residue polypeptide: Large ribosomal subunit protein bL19 (124 aa).

It belongs to the bacterial ribosomal protein bL19 family.

Functionally, this protein is located at the 30S-50S ribosomal subunit interface and may play a role in the structure and function of the aminoacyl-tRNA binding site. The chain is Large ribosomal subunit protein bL19 from Orientia tsutsugamushi (strain Ikeda) (Rickettsia tsutsugamushi).